The sequence spans 604 residues: BTB/POZ domain-containing protein SR1IP1 (604 aa).

Residues 27–96 (SDVTVHVGEA…CYGINFDMST (70 aa)) form the BTB domain. The NPH3 domain occupies 201–474 (DWWAEDLTVL…VQVLYYEQQR (274 aa)). Y415 carries the phosphotyrosine modification. 2 disordered regions span residues 478–499 (EVTNDSDSPAPPPPQPAAVLPP) and 532–604 (FEKE…HSIS). The stretch at 500–541 (KLSSYTDELSKLKRENQDLKLELLKMKMKLKEFEKESEKKTS) forms a coiled coil. Over residues 541-558 (SSSTISTNPSSPISTAST) the composition is skewed to low complexity. Residues 591–604 (GRTKPPKDRRHSIS) show a composition bias toward basic residues.

It belongs to the NPH3 family. As to quaternary structure, interacts with CAMTA3 and CUL3A.

The protein operates within protein modification; protein ubiquitination. In terms of biological role, acts as a substrate-specific adapter of an E3 ubiquitin-protein ligase complex (CUL3-RBX1-BTB) which mediates the ubiquitination and subsequent proteasomal degradation of target proteins. Involved in disease resistance. Acts as a substrate adapter that recruits CAMTA3/SR1 for ubiquitination and degradation during pathogen infection. Acts as a positive regulator of plant defense by removing the defense suppressor CAMTA3/SR1. This is BTB/POZ domain-containing protein SR1IP1 from Arabidopsis thaliana (Mouse-ear cress).